Here is a 315-residue protein sequence, read N- to C-terminus: L-lactate dehydrogenase (315 aa).

Residues Val14, Asp35, and Tyr66 each coordinate NAD(+). Substrate contacts are provided by residues Gln83, Arg89, and 121–124 (NPVD). NAD(+)-binding positions include 119-121 (VAN) and Ser144. Residue 149-152 (DTAR) coordinates substrate. The active-site Proton acceptor is His176. Residue Tyr221 is modified to Phosphotyrosine. Residue Thr230 participates in substrate binding.

This sequence belongs to the LDH/MDH superfamily. LDH family. Homotetramer.

Its subcellular location is the cytoplasm. It carries out the reaction (S)-lactate + NAD(+) = pyruvate + NADH + H(+). It functions in the pathway fermentation; pyruvate fermentation to lactate; (S)-lactate from pyruvate: step 1/1. Functionally, catalyzes the conversion of lactate to pyruvate. The chain is L-lactate dehydrogenase from Mesomycoplasma hyopneumoniae (strain 7448) (Mycoplasma hyopneumoniae).